Reading from the N-terminus, the 366-residue chain is DNA-directed RNA polymerase II subunit GRINL1A (366 aa).

The interval 1–23 (MFSLPRGFEPPAPEDLGRQSSAE) is disordered. Residues 15–39 (DLGRQSSAELRERLRRQERLLRNEK) are a coiled coil. The segment at 29-68 (RRQERLLRNEKFICKLPDKGKKISDTVAKLKAAISEREEV) is important for transcription repressor activity. 4 disordered regions span residues 88 to 140 (ATTR…HRGN), 158 to 182 (IRAR…QEEE), 201 to 225 (ADQS…ETPK), and 237 to 280 (ARNP…RRAR). Basic and acidic residues predominate over residues 90–100 (TRADTDVDKAQ). Residues 101–127 (SSDLMLDTSSLDPDCSSIDIKSSKSTS) are compositionally biased toward low complexity. Positions 225-296 (KKPHYMKVLE…TAARLLPLHH (72 aa)) are interaction with Pol II. Positions 251–272 (VLPTQQSDSPSHCQRGQSPASS) are enriched in polar residues. The residue at position 268 (serine 268) is a Phosphoserine. The segment at 297 to 312 (LPAQLLSIEESLALQR) is important for transcription repressor activity. Residues 299–333 (AQLLSIEESLALQREQKQNYEEMQAKLAAQKLAER) are a coiled coil. Residues 313 to 338 (EQKQNYEEMQAKLAAQKLAERLNIKM) form an interaction with Pol II region. The interval 338 to 366 (MQSYNPEGESSGRYREVRDEADAQSSDEC) is disordered. The segment covering 347–358 (SSGRYREVRDEA) has biased composition (basic and acidic residues).

It belongs to the GRINL1 family. As to quaternary structure, component of the Pol II(G) complex, which contains the RNA polymerase II (Pol II) core complex subunits and POLR2M isoform 1. Pol II(G) appears to be an abundant form of Pol II. Post-translationally, dephosphorylated at Ser-268 by the PNUTS-PP1 complex, promoting RNA polymerase II transcription pause-release.

It is found in the nucleus. Appears to be a stable component of the Pol II(G) complex form of RNA polymerase II (Pol II). Pol II synthesizes mRNA precursors and many functional non-coding RNAs and is the central component of the basal RNA polymerase II transcription machinery. May play a role in the Mediator complex-dependent regulation of transcription activation. Acts as a negative regulator of transcriptional activation; this repression is relieved by the Mediator complex, which restores Pol II(G) activator-dependent transcription to a level equivalent to that of Pol II. This is DNA-directed RNA polymerase II subunit GRINL1A (Polr2m) from Mus musculus (Mouse).